The following is a 534-amino-acid chain: Lysophosphatidylcholine acyltransferase 1 (534 aa).

A disordered region spans residues 1-25 (MRLRGRGPRAAPSSSSGAGDARRLA). Topologically, residues 1–57 (MRLRGRGPRAAPSSSSGAGDARRLAPPGRNPFVHELRLSALQKAQVAFMTLTLFPIR) are cytoplasmic. Residues 8–19 (PRAAPSSSSGAG) show a composition bias toward low complexity. A helical; Signal-anchor for type II membrane protein transmembrane segment spans residues 58 to 78 (LLFAAFMMLLAWPFALLASLG). The Lumenal segment spans residues 79 to 534 (PPDKEPEQPL…GRKNSCKKAD (456 aa)). Positions 135–140 (HSSYFD) match the HXXXXD motif motif. EF-hand domains are found at residues 379 to 414 (PVSD…VCRP) and 451 to 486 (VSEL…YPDY). Positions 392, 394, 398, and 403 each coordinate Ca(2+). The Di-lysine motif motif lies at 531–534 (KKAD).

The protein belongs to the 1-acyl-sn-glycerol-3-phosphate acyltransferase family. In terms of tissue distribution, predominantly expressed in lung where it is enriched in alveolar type II cells. Expressed at lower levels in spleen and brain. Also detected in erythroleukemic cells and reticulocytes. Weakly or not expressed in other tissues.

It is found in the endoplasmic reticulum membrane. The protein resides in the golgi apparatus membrane. The protein localises to the cell membrane. It localises to the lipid droplet. It carries out the reaction a 1-acyl-sn-glycero-3-phosphocholine + an acyl-CoA = a 1,2-diacyl-sn-glycero-3-phosphocholine + CoA. The catalysed reaction is a 1-O-alkyl-sn-glycero-3-phosphocholine + acetyl-CoA = a 1-O-alkyl-2-acetyl-sn-glycero-3-phosphocholine + CoA. It catalyses the reaction a 1-acyl-sn-glycero-3-phosphate + an acyl-CoA = a 1,2-diacyl-sn-glycero-3-phosphate + CoA. The enzyme catalyses a 1-O-(1Z-alkenyl)-sn-glycero-3-phosphocholine + an acyl-CoA = a 1-O-(1Z-alkenyl)-2-acyl-sn-glycero-3-phosphocholine + CoA. It carries out the reaction 1-acyl-sn-glycero-3-phospho-(1'-sn-glycerol) + an acyl-CoA = a 1,2-diacyl-sn-glycero-3-phospho-(1'-sn-glycerol) + CoA. The catalysed reaction is 1-hexadecanoyl-sn-glycero-3-phosphocholine + hexadecanoyl-CoA = 1,2-dihexadecanoyl-sn-glycero-3-phosphocholine + CoA. It catalyses the reaction 1-O-hexadecyl-sn-glycero-3-phosphocholine + hexadecanoyl-CoA = 1-O-hexadecyl-2-hexadecanoyl-sn-glycero-3-phosphocholine + CoA. The enzyme catalyses a 1-O-(1Z-alkenyl)-sn-glycero-3-phosphocholine + hexadecanoyl-CoA = 1-O-(1Z)-alkenyl-2-hexadecanoyl-sn-glycero-3-phosphocholine + CoA. It carries out the reaction 1-hexadecanoyl-sn-glycero-3-phospho-(1'-sn-glycerol) + hexadecanoyl-CoA = 1,2-dihexadecanoyl-sn-glycero-3-phospho-(1'-sn-glycerol) + CoA. The catalysed reaction is 1-dodecanoyl-sn-glycero-3-phosphocholine + hexadecanoyl-CoA = 1-dodecanoyl-2-hexadecanoyl-sn-glycero-3-phosphocholine + CoA. It catalyses the reaction 1-tetradecanoyl-sn-glycero-3-phosphocholine + hexadecanoyl-CoA = 1-tetradecanoyl-2-hexadecanoyl-sn-glycero-3-phosphocholine + CoA. The enzyme catalyses 1-O-octadecyl-sn-glycero-3-phosphocholine + hexadecanoyl-CoA = 1-O-octadecyl-2-hexadecanoyl-sn-glycero-3-phosphocholine + CoA. It carries out the reaction 1-octadecanoyl-sn-glycero-3-phosphocholine + hexadecanoyl-CoA = 1-octadecanoyl-2-hexadecanoyl-sn-glycero-3-phosphocholine + CoA. The catalysed reaction is 1-(9Z-octadecenoyl)-sn-glycero-3-phosphocholine + hexadecanoyl-CoA = 1-(9Z-octadecenoyl)-2-hexadecanoyl-sn-glycero-3-phosphocholine + CoA. It catalyses the reaction 1-eicosanoyl-sn-glycero-3-phosphocholine + hexadecanoyl-CoA = 1-eicosanoyl-2-hexadecanoyl-sn-glycero-3-phosphocholine + CoA. The enzyme catalyses hexanoyl-CoA + 1-hexadecanoyl-sn-glycero-3-phosphocholine = 1-hexadecanoyl-2-hexanoyl-sn-glycero-3-phosphocholine + CoA. It carries out the reaction octanoyl-CoA + 1-hexadecanoyl-sn-glycero-3-phosphocholine = 1-hexadecanoyl-2-octanoyl-sn-glycero-3-phosphocholine + CoA. The catalysed reaction is decanoyl-CoA + 1-hexadecanoyl-sn-glycero-3-phosphocholine = 1-hexadecanoyl-2-decanoyl-sn-glycero-3-phosphocholine + CoA. It catalyses the reaction dodecanoyl-CoA + 1-hexadecanoyl-sn-glycero-3-phosphocholine = 1-hexadecanoyl-2-dodecanoyl-sn-glycero-3-phosphocholine + CoA. The enzyme catalyses tetradecanoyl-CoA + 1-hexadecanoyl-sn-glycero-3-phosphocholine = 1-hexadecanoyl-2-tetradecanoyl-sn-glycero-3-phosphocholine + CoA. It carries out the reaction 1-hexadecanoyl-sn-glycero-3-phosphocholine + (9Z)-octadecenoyl-CoA = 1-hexadecanoyl-2-(9Z-octadecenoyl)-sn-glycero-3-phosphocholine + CoA. The catalysed reaction is (9Z,12Z)-octadecadienoyl-CoA + 1-hexadecanoyl-sn-glycero-3-phosphocholine = 1-hexadecanoyl-2-(9Z,12Z-octadecadienoyl)-sn-glycero-3-phosphocholine + CoA. It catalyses the reaction (4Z,7Z,10Z,13Z,16Z,19Z)-docosahexaenoyl-CoA + 1-hexadecanoyl-sn-glycero-3-phosphocholine = 1-hexadecanoyl-2-(4Z,7Z,10Z,13Z,16Z,19Z-docosahexaenoyl)-sn-glycero-3-phosphocholine + CoA. The enzyme catalyses 1-hexadecanoyl-sn-glycero-3-phosphocholine + acetyl-CoA = 1-hexadecanoyl-2-acetyl-sn-glycero-3-phosphocholine + CoA. It carries out the reaction eicosanoyl-CoA + 1-hexadecanoyl-sn-glycero-3-phosphocholine = 1-hexadecanoyl-2-eicosanoyl-sn-glycero-3-phosphocholine + CoA. The catalysed reaction is 1-O-hexadecyl-sn-glycero-3-phosphocholine + acetyl-CoA = 1-O-hexadecyl-2-acetyl-sn-glycero-3-phosphocholine + CoA. It catalyses the reaction a 1-acyl-sn-glycero-3-phosphocholine + hexadecanoyl-CoA = 1-acyl-2-hexadecanoyl-sn-glycero-3-phosphocholine + CoA. The enzyme catalyses a 1-acyl-sn-glycero-3-phosphate + hexadecanoyl-CoA = 1-acyl-2-hexadecanoyl-sn-glycero-3-phosphate + CoA. It carries out the reaction 1-acyl-sn-glycero-3-phospho-(1'-sn-glycerol) + hexadecanoyl-CoA = 1-acyl-2-hexadecanoyl-sn-glycero-3-phospho-(1'-sn-glycerol) + CoA. The protein operates within lipid metabolism; phospholipid metabolism. With respect to regulation, not activated by inflammatory stimulation. Inhibited by Cu(2+), Fe(2+), Ca(2+) and Mg(2+). Activity is not affected by Co(2+) or Mn(2+). Its function is as follows. Exhibits both acyltransferase and acetyltransferase activities. Activity is calcium-independent. Catalyzes the conversion of lysophosphatidylcholine (1-acyl-sn-glycero-3-phosphocholine or LPC) into phosphatidylcholine (1,2-diacyl-sn-glycero-3-phosphocholine or PC). Catalyzes the conversion 1-acyl-sn-glycerol-3-phosphate (lysophosphatidic acid or LPA) into 1,2-diacyl-sn-glycerol-3-phosphate (phosphatidic acid or PA) by incorporating an acyl moiety at the sn-2 position of the glycerol backbone. Displays a clear preference for saturated fatty acyl-CoAs, and 1-myristoyl or 1-palmitoyl LPC as acyl donors and acceptors, respectively. Involved in platelet-activating factor (PAF) biosynthesis by catalyzing the conversion of the PAF precursor, 1-O-alkyl-sn-glycero-3-phosphocholine (lyso-PAF) into 1-O-alkyl-2-acetyl-sn-glycero-3-phosphocholine (PAF). May synthesize phosphatidylcholine in pulmonary surfactant, thereby playing a pivotal role in respiratory physiology. Involved in the regulation of lipid droplet number and size. The protein is Lysophosphatidylcholine acyltransferase 1 (Lpcat1) of Mus musculus (Mouse).